A 530-amino-acid chain; its full sequence is Ubiquitin carboxyl-terminal hydrolase 17-like protein 13 (530 aa).

Positions 80–375 (AGLQNMGNTC…QAYVLFYIQK (296 aa)) constitute a USP domain. Catalysis depends on cysteine 89, which acts as the Nucleophile. Histidine 334 functions as the Proton acceptor in the catalytic mechanism. Basic and acidic residues-rich tracts occupy residues 382 to 392 (SESVSRGREPR) and 398 to 412 (DTDR…KRDH). Disordered stretches follow at residues 382-412 (SESV…KRDH) and 477-530 (NHHP…LVCQ). Over residues 493-505 (TPTHQESMNTGTL) the composition is skewed to polar residues. Basic residues predominate over residues 510-524 (GRARRSKGKNKHSKR).

This sequence belongs to the peptidase C19 family. USP17 subfamily.

It is found in the nucleus. Its subcellular location is the endoplasmic reticulum. It carries out the reaction Thiol-dependent hydrolysis of ester, thioester, amide, peptide and isopeptide bonds formed by the C-terminal Gly of ubiquitin (a 76-residue protein attached to proteins as an intracellular targeting signal).. Deubiquitinating enzyme that removes conjugated ubiquitin from specific proteins to regulate different cellular processes that may include cell proliferation, progression through the cell cycle, apoptosis, cell migration, and the cellular response to viral infection. This is Ubiquitin carboxyl-terminal hydrolase 17-like protein 13 (USP17L13) from Homo sapiens (Human).